The chain runs to 660 residues: tRNA 5-methylaminomethyl-2-thiouridine biosynthesis bifunctional protein MnmC (660 aa).

Residues 1–242 (MTDRIVPATL…KRAMLVGEFA (242 aa)) form a tRNA (mnm(5)s(2)U34)-methyltransferase region. The FAD-dependent cmnm(5)s(2)U34 oxidoreductase stretch occupies residues 266 to 660 (IGAGLAGCAV…VRALRHGRVA (395 aa)).

In the N-terminal section; belongs to the methyltransferase superfamily. tRNA (mnm(5)s(2)U34)-methyltransferase family. This sequence in the C-terminal section; belongs to the DAO family. FAD is required as a cofactor.

It is found in the cytoplasm. The catalysed reaction is 5-aminomethyl-2-thiouridine(34) in tRNA + S-adenosyl-L-methionine = 5-methylaminomethyl-2-thiouridine(34) in tRNA + S-adenosyl-L-homocysteine + H(+). Its function is as follows. Catalyzes the last two steps in the biosynthesis of 5-methylaminomethyl-2-thiouridine (mnm(5)s(2)U) at the wobble position (U34) in tRNA. Catalyzes the FAD-dependent demodification of cmnm(5)s(2)U34 to nm(5)s(2)U34, followed by the transfer of a methyl group from S-adenosyl-L-methionine to nm(5)s(2)U34, to form mnm(5)s(2)U34. The sequence is that of tRNA 5-methylaminomethyl-2-thiouridine biosynthesis bifunctional protein MnmC from Burkholderia pseudomallei (strain 1710b).